The primary structure comprises 98 residues: NADH-ubiquinone oxidoreductase chain 4L (98 aa).

3 helical membrane-spanning segments follow: residues 1-21 (MPPI…GLLM), 29-49 (SLLC…ILSL), and 61-81 (IILL…LVMI).

Belongs to the complex I subunit 4L family. Core subunit of respiratory chain NADH dehydrogenase (Complex I) which is composed of 45 different subunits.

The protein resides in the mitochondrion inner membrane. It catalyses the reaction a ubiquinone + NADH + 5 H(+)(in) = a ubiquinol + NAD(+) + 4 H(+)(out). Its function is as follows. Core subunit of the mitochondrial membrane respiratory chain NADH dehydrogenase (Complex I) which catalyzes electron transfer from NADH through the respiratory chain, using ubiquinone as an electron acceptor. Part of the enzyme membrane arm which is embedded in the lipid bilayer and involved in proton translocation. The protein is NADH-ubiquinone oxidoreductase chain 4L (MT-ND4L) of Galeopterus variegatus (Malayan flying lemur).